A 245-amino-acid chain; its full sequence is Zinc import ATP-binding protein ZnuC (245 aa).

One can recognise an ABC transporter domain in the interval 27-244; the sequence is LTADSLTLFY…AKFLSVFPNN (218 aa). 59 to 66 serves as a coordination point for ATP; that stretch reads GPNGGGKT.

Belongs to the ABC transporter superfamily. Zinc importer (TC 3.A.1.15.5) family. As to quaternary structure, the complex is composed of two ATP-binding proteins (ZnuC), two transmembrane proteins (ZnuB) and a solute-binding protein (ZnuA).

The protein localises to the cell inner membrane. It catalyses the reaction Zn(2+)(out) + ATP(in) + H2O(in) = Zn(2+)(in) + ADP(in) + phosphate(in) + H(+)(in). Part of the ABC transporter complex ZnuABC involved in zinc import. Responsible for energy coupling to the transport system. The protein is Zinc import ATP-binding protein ZnuC of Anaplasma marginale (strain St. Maries).